The primary structure comprises 101 residues: Gastrin (101 aa).

The N-terminal stretch at 1–21 is a signal peptide; it reads MPRLCVYMLVLVLALATFSEA. The tract at residues 23 to 101 is disordered; that stretch reads WKPRSQLQDA…FGRRSAEEDQ (79 aa). Polar residues predominate over residues 25-37; it reads PRSQLQDASSGPG. A Sulfotyrosine modification is found at Tyr87. Phe92 bears the Phenylalanine amide mark. Over residues 92–101 the composition is skewed to basic and acidic residues; the sequence is FGRRSAEEDQ. Residue Ser96 is modified to Phosphoserine. The propeptide occupies 96-101; that stretch reads SAEEDQ.

It belongs to the gastrin/cholecystokinin family. Post-translationally, sulfation enhances proteolytic processing, and blocks peptide degradation. Levels of sulfation differ between proteolytically-cleaved gastrins and between tissues. Abundantly expressed in the stomach and duodenum. Low levels in brain, ovary and pancreas.

Its subcellular location is the secreted. In terms of biological role, gastrin stimulates the stomach mucosa to produce and secrete hydrochloric acid and the pancreas to secrete its digestive enzymes. It also stimulates smooth muscle contraction and increases blood circulation and water secretion in the stomach and intestine. In Mus musculus (Mouse), this protein is Gastrin (Gast).